Here is a 400-residue protein sequence, read N- to C-terminus: S-adenosylmethionine sensor upstream of mTORC1 (400 aa).

6 residues coordinate S-adenosyl-L-methionine: Arg-99, Gly-168, Asp-186, Asp-198, Phe-199, and Ser-240.

This sequence belongs to the BMT2/SAMTOR family. As to quaternary structure, interacts with the GATOR1 complex; interaction is disrupted when samtor binds S-adenosyl-L-methionine. Interacts with the KICSTOR complex; interaction is disrupted when samtor binds S-adenosyl-L-methionine.

Functionally, S-adenosyl-L-methionine-binding protein that acts as an inhibitor of mTORC1 signaling via interaction with the GATOR1 and KICSTOR complexes. Acts as a sensor of S-adenosyl-L-methionine to signal methionine sufficiency to mTORC1: in presence of methionine, binds S-adenosyl-L-methionine, leading to disrupt interaction with the GATOR1 and KICSTOR complexes and promote mTORC1 signaling. Upon methionine starvation, S-adenosyl-L-methionine levels are reduced, thereby promoting the association with GATOR1 and KICSTOR, leading to inhibit mTORC1 signaling. Probably also acts as a S-adenosyl-L-methionine-dependent methyltransferase. This chain is S-adenosylmethionine sensor upstream of mTORC1, found in Xenopus laevis (African clawed frog).